The sequence spans 1193 residues: Magnesium-chelatase subunit H (1193 aa).

Belongs to the Mg-chelatase subunit H family.

It catalyses the reaction protoporphyrin IX + Mg(2+) + ATP + H2O = Mg-protoporphyrin IX + ADP + phosphate + 3 H(+). It participates in porphyrin-containing compound metabolism; bacteriochlorophyll biosynthesis (light-independent). Functionally, involved in bacteriochlorophyll pigment biosynthesis; introduces a magnesium ion into protoporphyrin IX to yield Mg-protoroporphyrin IX. The chain is Magnesium-chelatase subunit H (bchH) from Cereibacter sphaeroides (strain ATCC 17023 / DSM 158 / JCM 6121 / CCUG 31486 / LMG 2827 / NBRC 12203 / NCIMB 8253 / ATH 2.4.1.) (Rhodobacter sphaeroides).